Consider the following 123-residue polypeptide: Thioredoxin domain-containing protein 17 (123 aa).

The Thioredoxin domain occupies 41-123 (SWCPDCVKAE…DLVRMMFTED (83 aa)). Active-site nucleophile residues include C43 and C46. Cysteines 43 and 46 form a disulfide.

This sequence belongs to the thioredoxin family.

The protein localises to the cytoplasm. Disulfide reductase. May participate in various redox reactions through the reversible oxidation of its active center dithiol to a disulfide and catalyze dithiol-disulfide exchange reactions. Has peroxidase activity and may contribute to the elimination of cellular hydrogen peroxide. The sequence is that of Thioredoxin domain-containing protein 17 (txndc17) from Danio rerio (Zebrafish).